We begin with the raw amino-acid sequence, 419 residues long: Transcription termination factor Rho (419 aa).

The 76-residue stretch at 48–123 folds into the Rho RNA-BD domain; the sequence is DIFGDGVLEI…LKVNEVNFDK (76 aa). RNA-binding regions lie at residues 61–66, 78–80, and 108–110; these read GFGFLR, DIY, and ERY. Residues 169–174, 181–186, and Arg-212 each bind ATP; these read GRGQRG and KAGKTM. The RNA-binding 2 stretch occupies residues 284 to 288; that stretch reads VLTGG.

It belongs to the Rho family. As to quaternary structure, homohexamer. The homohexamer assembles into an open ring structure.

Facilitates transcription termination by a mechanism that involves Rho binding to the nascent RNA, activation of Rho's RNA-dependent ATPase activity, and release of the mRNA from the DNA template. The chain is Transcription termination factor Rho from Escherichia coli O157:H7.